The primary structure comprises 193 residues: Ribosomal RNA large subunit methyltransferase E (193 aa).

Residues Gly-48, Phe-50, Asp-67, Asn-85, and Asp-107 each coordinate S-adenosyl-L-methionine. Catalysis depends on Lys-147, which acts as the Proton acceptor.

The protein belongs to the class I-like SAM-binding methyltransferase superfamily. RNA methyltransferase RlmE family.

The protein resides in the cytoplasm. It catalyses the reaction uridine(2552) in 23S rRNA + S-adenosyl-L-methionine = 2'-O-methyluridine(2552) in 23S rRNA + S-adenosyl-L-homocysteine + H(+). Its function is as follows. Specifically methylates the uridine in position 2552 of 23S rRNA at the 2'-O position of the ribose in the fully assembled 50S ribosomal subunit. In Borrelia duttonii (strain Ly), this protein is Ribosomal RNA large subunit methyltransferase E.